The following is a 482-amino-acid chain: Putative dipeptidase NECHADRAFT_87110 (482 aa).

Polar residues predominate over residues 1–21 (MADTQTPNLQNTAEGDANTSA). The disordered stretch occupies residues 1–24 (MADTQTPNLQNTAEGDANTSAENE). A glycan (N-linked (GlcNAc...) asparagine) is linked at N18. Residues 41–61 (WLRYPFLVAGIALFLGPFSFF) traverse the membrane as a helical segment. Residues H90, D92, and E201 each coordinate Zn(2+). A disulfide bridge links C141 with C230. H228 serves as a coordination point for substrate. Residues H272 and H293 each contribute to the Zn(2+) site. Positions 304 and 364 each coordinate substrate.

Belongs to the metallo-dependent hydrolases superfamily. Peptidase M19 family. Zn(2+) is required as a cofactor.

It is found in the membrane. The catalysed reaction is an L-aminoacyl-L-amino acid + H2O = 2 an L-alpha-amino acid. In terms of biological role, hydrolyzes a wide range of dipeptides. This Fusarium vanettenii (strain ATCC MYA-4622 / CBS 123669 / FGSC 9596 / NRRL 45880 / 77-13-4) (Fusarium solani subsp. pisi) protein is Putative dipeptidase NECHADRAFT_87110.